A 787-amino-acid chain; its full sequence is Lysine-specific demethylase JMJ13 (787 aa).

Positions 103–144 (CPVYRPTKEEFEDPLTYLQKIFPEASKYGICKIVSPLTATVP) constitute a JmjN domain. Residues 250-420 (SSKWNLNKVS…FGAIASCRYA (171 aa)) form the JmjC domain. Fe cation-binding residues include His-293, Glu-295, and His-388. Zn(2+)-binding residues include Cys-500, Cys-503, Cys-514, Cys-516, His-519, Cys-522, His-525, and Cys-534. The C4HCHC zinc finger occupies 500 to 551 (CSLCKRDCYLAFINCECYSHPVCLRHDVKKLDLPCGTTHTLYLRDNIEDMEA). Residues 500-551 (CSLCKRDCYLAFINCECYSHPVCLRHDVKKLDLPCGTTHTLYLRDNIEDMEA) form a C5HC2 zinc finger. The FYR N-terminal domain maps to 617 to 675 (VMSYEANASCISSVADDYECSDYVNRRANCSSSSDSKLSEEVACSSSKKTRFFPVVQDE). Positions 677–756 (LVADQESDGS…ELVISNRKET (80 aa)) constitute an FYR C-terminal domain. Residues 712–769 (ESDHHQELKRLKKSHHHEGRYSSSSSVSRQEEEEDELVISNRKETQQQSDVKMQKKRI) form a disordered region. The Nuclear localization signal motif lies at 752 to 759 (NRKETQQQ).

Belongs to the JARID1 histone demethylase family. Requires Fe(2+) as cofactor. As to expression, mostly expressed in leaves, and, to a lower extent, in inflorescences, roots, siliques and stems.

The protein resides in the nucleus. It catalyses the reaction N(6),N(6),N(6)-trimethyl-L-lysyl(27)-[histone H3] + 2-oxoglutarate + O2 = N(6),N(6)-dimethyl-L-lysyl(27)-[histone H3] + formaldehyde + succinate + CO2. Its function is as follows. Histone demethylase that demethylates 'Lys-27' (H3K27me) of histone H3 with a specific activity for H3K27me3 and involved in the regulation of gene expression. Acts as a temperature and photoperiod dependent flowering repressor. This chain is Lysine-specific demethylase JMJ13, found in Arabidopsis thaliana (Mouse-ear cress).